Reading from the N-terminus, the 208-residue chain is Large ribosomal subunit protein uL4 (208 aa).

The interval 44–85 (RQGTKKTKTRAEVRGGGKKPWRQKGTGRARQGSIRAPHWRGG) is disordered. Basic residues predominate over residues 59 to 70 (GGKKPWRQKGTG).

Belongs to the universal ribosomal protein uL4 family. In terms of assembly, part of the 50S ribosomal subunit.

One of the primary rRNA binding proteins, this protein initially binds near the 5'-end of the 23S rRNA. It is important during the early stages of 50S assembly. It makes multiple contacts with different domains of the 23S rRNA in the assembled 50S subunit and ribosome. Its function is as follows. Forms part of the polypeptide exit tunnel. The polypeptide is Large ribosomal subunit protein uL4 (Mesoplasma florum (strain ATCC 33453 / NBRC 100688 / NCTC 11704 / L1) (Acholeplasma florum)).